We begin with the raw amino-acid sequence, 526 residues long: mRNA export factor ICP27 homolog (526 aa).

4 residues coordinate Zn(2+): Cys-239, His-344, Cys-346, and Cys-351. The CHC2-type zinc finger occupies 239-351 (CVFNDNGHGD…NNHQCDDIGC (113 aa)).

This sequence belongs to the HHV-1 ICP27 protein family.

The protein resides in the virion tegument. Its subcellular location is the virion. The protein localises to the host nucleus. It is found in the host cytoplasm. Its function is as follows. Immediate early (EI) protein that plays many roles during productive infection including regulation of viral gene expression and nuclear export of intronless viral RNAs. The chain is mRNA export factor ICP27 homolog from Human herpesvirus 7 (strain JI) (HHV-7).